The primary structure comprises 487 residues: MSWKDTAEPLLVRMPAVQRPEGHVPFKRKLTWTGGVLLLYFFLTNVKLFGLDIDASQQVFGRFSSILASGQGSIMQLGIGPIVTASIVLQLLGGADLLGLNTQDDPRDQILYQGLQKLLVLVMICLTGLPMVFAGGFLPADTAVANSLGIGTAGVQWLIFAQMFVGGVLILFMDEVISKWGVGSGIGLFIVAGVSQRLVGGLLTAPFLGNSEGIIYTWYLFITGERGTGPVLAADGLQTVLLQGELLGLFTTVLIFAVVVYAESVRVEIPLSNARVKGARGRFPVKLIYASVLPMILVRALQANIQFLGRILNAQLGSMPAFLGTYANGQPTGGLFYFLAPIQSRGDWMWWLEGTAQPVWQILTRVGIDLFVMLVGGAVFAVFWVETTDMGPEATAKQIHNSGMQIPGFRQNVGVIEKVLERYIPQVTVIGGALVGLLAVMANMLGTIGGVSGTGLLLTVSITYKLYEEIAEEQLMEMHPMMRQMFG.

At 1–20 (MSWKDTAEPLLVRMPAVQRP) the chain is on the cytoplasmic side. Residues 21 to 47 (EGHVPFKRKLTWTGGVLLLYFFLTNVK) traverse the membrane as a helical segment. At 48 to 59 (LFGLDIDASQQV) the chain is on the extracellular side. An intramembrane region (helical) is located at residues 60 to 67 (FGRFSSIL). A discontinuously helical transmembrane segment spans residues 60–88 (FGRFSSILASGQGSIMQLGIGPIVTASIV). Residues 68 to 79 (ASGQGSIMQLGI) lie within the membrane without spanning it. Residues 80–88 (GPIVTASIV) constitute an intramembrane region (helical). The Cytoplasmic portion of the chain corresponds to 89–110 (LQLLGGADLLGLNTQDDPRDQI). The chain crosses the membrane as a helical span at residues 111–135 (LYQGLQKLLVLVMICLTGLPMVFAG). Residues 136 to 153 (GFLPADTAVANSLGIGTA) lie on the Extracellular side of the membrane. Residues 154-178 (GVQWLIFAQMFVGGVLILFMDEVIS) traverse the membrane as a helical segment. Residues 179–184 (KWGVGS) lie on the Cytoplasmic side of the membrane. Residues 185–203 (GIGLFIVAGVSQRLVGGLL) traverse the membrane as a helical segment. Over 204–244 (TAPFLGNSEGIIYTWYLFITGERGTGPVLAADGLQTVLLQG) the chain is Extracellular. Residues 245 to 266 (ELLGLFTTVLIFAVVVYAESVR) traverse the membrane as a helical segment. The Cytoplasmic portion of the chain corresponds to 267–291 (VEIPLSNARVKGARGRFPVKLIYAS). Residues 292–313 (VLPMILVRALQANIQFLGRILN) form a helical membrane-spanning segment. The Extracellular segment spans residues 314–364 (AQLGSMPAFLGTYANGQPTGGLFYFLAPIQSRGDWMWWLEGTAQPVWQILT). The helical transmembrane segment at 365 to 384 (RVGIDLFVMLVGGAVFAVFW) threads the bilayer. Over 385–427 (VETTDMGPEATAKQIHNSGMQIPGFRQNVGVIEKVLERYIPQV) the chain is Cytoplasmic. The helical transmembrane segment at 428–446 (TVIGGALVGLLAVMANMLG) threads the bilayer. The Extracellular segment spans residues 447–451 (TIGGV). The helical transmembrane segment at 452 to 466 (SGTGLLLTVSITYKL) threads the bilayer. The Cytoplasmic portion of the chain corresponds to 467 to 487 (YEEIAEEQLMEMHPMMRQMFG).

This sequence belongs to the SecY/SEC61-alpha family. In terms of assembly, component of the Sec protein translocase complex. Heterotrimer consisting of alpha (SecY), beta (SecG) and gamma (SecE) subunits. The heterotrimers can form oligomers, although 1 heterotrimer is thought to be able to translocate proteins. Interacts with the ribosome. May interact with SecDF, and other proteins may be involved.

The protein localises to the cell membrane. Its function is as follows. The central subunit of the protein translocation channel SecYEG. Consists of two halves formed by TMs 1-5 and 6-10. These two domains form a lateral gate at the front which open onto the bilayer between TMs 2 and 7, and are clamped together by SecE at the back. The channel is closed by both a pore ring composed of hydrophobic SecY resides and a short helix (helix 2A) on the extracellular side of the membrane which forms a plug. The plug probably moves laterally to allow the channel to open. The ring and the pore may move independently. The chain is Protein translocase subunit SecY from Haloarcula marismortui (strain ATCC 43049 / DSM 3752 / JCM 8966 / VKM B-1809) (Halobacterium marismortui).